Consider the following 493-residue polypeptide: MNKHASQPRAIYYVVALQIWEYFSFYGMRALLILYLTNQLKYNDTHAYELFSAYCSLVYVTPILGGFLADKVLGNRMAVMLGALLMAIGHVVLGASEIHPSFLYLSLAIIVCGYGLFKSNVSCLLGELYEPTDPRRDGGFSLMYAAGNVGSIIAPIACGYAQEEYSWAMGFGLAAVGMIAGLVIFLCGNRHFTHTRGVNKKVLRATNFLLPNWGWLLVLLVATPALITILFWKEWSVYALIVATIIGLGVLAKIYRKAENQKQRKELGLIVTLTFFSMLFWAFAQQGGSSISLYIDRFVNRDMFGYTVPTAMFQSINAFAVMLCGVFLAWVVKESVAGNRTVRIWGKFALGLGLMSAGFCILTLSARWSAMYGHSSLPLMVLGLAVMGFAELFIDPVAMSQITRIEIPGVTGVLTGIYMLLSGAIANYLAGVIADQTSQASFDASGAINYSINAYIEVFDQITWGALACVGLVLMIWLYQALKFRNRALALES.

Topologically, residues 1-13 (MNKHASQPRAIYY) are cytoplasmic. Residues 14–34 (VVALQIWEYFSFYGMRALLIL) traverse the membrane as a helical segment. Residues 35–48 (YLTNQLKYNDTHAY) are Periplasmic-facing. The chain crosses the membrane as a helical span at residues 49-69 (ELFSAYCSLVYVTPILGGFLA). The Cytoplasmic portion of the chain corresponds to 70-77 (DKVLGNRM). Residues 78–98 (AVMLGALLMAIGHVVLGASEI) form a helical membrane-spanning segment. Residues 99 to 100 (HP) lie on the Periplasmic side of the membrane. Residues 101-121 (SFLYLSLAIIVCGYGLFKSNV) form a helical membrane-spanning segment. Residues 122 to 137 (SCLLGELYEPTDPRRD) are Cytoplasmic-facing. Residues 138-158 (GGFSLMYAAGNVGSIIAPIAC) traverse the membrane as a helical segment. Over 159–166 (GYAQEEYS) the chain is Periplasmic. A helical transmembrane segment spans residues 167–187 (WAMGFGLAAVGMIAGLVIFLC). The Cytoplasmic portion of the chain corresponds to 188–211 (GNRHFTHTRGVNKKVLRATNFLLP). Residues 212-232 (NWGWLLVLLVATPALITILFW) traverse the membrane as a helical segment. Topologically, residues 233-234 (KE) are periplasmic. A helical membrane pass occupies residues 235-255 (WSVYALIVATIIGLGVLAKIY). The Cytoplasmic portion of the chain corresponds to 256–266 (RKAENQKQRKE). The helical transmembrane segment at 267 to 287 (LGLIVTLTFFSMLFWAFAQQG) threads the bilayer. The Periplasmic portion of the chain corresponds to 288 to 311 (GSSISLYIDRFVNRDMFGYTVPTA). A helical transmembrane segment spans residues 312-332 (MFQSINAFAVMLCGVFLAWVV). The Cytoplasmic segment spans residues 333–343 (KESVAGNRTVR). The chain crosses the membrane as a helical span at residues 344 to 364 (IWGKFALGLGLMSAGFCILTL). Residues 365-378 (SARWSAMYGHSSLP) lie on the Periplasmic side of the membrane. The chain crosses the membrane as a helical span at residues 379-399 (LMVLGLAVMGFAELFIDPVAM). Residues 400 to 412 (SQITRIEIPGVTG) are Cytoplasmic-facing. A helical membrane pass occupies residues 413–433 (VLTGIYMLLSGAIANYLAGVI). Residues 434 to 461 (ADQTSQASFDASGAINYSINAYIEVFDQ) lie on the Periplasmic side of the membrane. A helical transmembrane segment spans residues 462–482 (ITWGALACVGLVLMIWLYQAL). The Cytoplasmic segment spans residues 483–493 (KFRNRALALES).

Belongs to the major facilitator superfamily. Proton-dependent oligopeptide transporter (POT/PTR) (TC 2.A.17) family. DtpD subfamily.

The protein resides in the cell inner membrane. Its function is as follows. Probable proton-dependent permease that transports dipeptides. This Escherichia coli (strain K12) protein is Dipeptide permease D (dtpD).